The chain runs to 156 residues: Cytochrome c-type biogenesis protein CcmE 2 (156 aa).

The Cytoplasmic segment spans residues 1–8; that stretch reads MNPQRRRR. A helical; Signal-anchor for type II membrane protein transmembrane segment spans residues 9 to 29; it reads LWWVLALLLAGGLATTLVSMA. Residues 30-156 are Periplasmic-facing; that stretch reads LQRNVAYLYT…AAANQGGALR (127 aa). 2 residues coordinate heme: His-123 and Tyr-127. The tract at residues 135–156 is disordered; that stretch reads KMGSAHRKHDVPAAANQGGALR.

It belongs to the CcmE/CycJ family.

It is found in the cell inner membrane. In terms of biological role, heme chaperone required for the biogenesis of c-type cytochromes. Transiently binds heme delivered by CcmC and transfers the heme to apo-cytochromes in a process facilitated by CcmF and CcmH. This Xanthomonas oryzae pv. oryzae (strain MAFF 311018) protein is Cytochrome c-type biogenesis protein CcmE 2.